A 126-amino-acid chain; its full sequence is Large ribosomal subunit protein bL19 (126 aa).

Belongs to the bacterial ribosomal protein bL19 family.

This protein is located at the 30S-50S ribosomal subunit interface and may play a role in the structure and function of the aminoacyl-tRNA binding site. This Gluconacetobacter diazotrophicus (strain ATCC 49037 / DSM 5601 / CCUG 37298 / CIP 103539 / LMG 7603 / PAl5) protein is Large ribosomal subunit protein bL19.